The chain runs to 495 residues: Aspartyl/glutamyl-tRNA(Asn/Gln) amidotransferase subunit B (495 aa).

This sequence belongs to the GatB/GatE family. GatB subfamily. In terms of assembly, heterotrimer of A, B and C subunits.

It carries out the reaction L-glutamyl-tRNA(Gln) + L-glutamine + ATP + H2O = L-glutaminyl-tRNA(Gln) + L-glutamate + ADP + phosphate + H(+). The enzyme catalyses L-aspartyl-tRNA(Asn) + L-glutamine + ATP + H2O = L-asparaginyl-tRNA(Asn) + L-glutamate + ADP + phosphate + 2 H(+). Allows the formation of correctly charged Asn-tRNA(Asn) or Gln-tRNA(Gln) through the transamidation of misacylated Asp-tRNA(Asn) or Glu-tRNA(Gln) in organisms which lack either or both of asparaginyl-tRNA or glutaminyl-tRNA synthetases. The reaction takes place in the presence of glutamine and ATP through an activated phospho-Asp-tRNA(Asn) or phospho-Glu-tRNA(Gln). This is Aspartyl/glutamyl-tRNA(Asn/Gln) amidotransferase subunit B from Acinetobacter baylyi (strain ATCC 33305 / BD413 / ADP1).